We begin with the raw amino-acid sequence, 169 residues long: Shikimate kinase (169 aa).

12–17 is a binding site for ATP; that stretch reads AVGKTT. Position 16 (Thr16) interacts with Mg(2+). Substrate is bound by residues Asp34, Arg58, and Gly80. Residue Arg119 participates in ATP binding. Arg139 is a substrate binding site. Position 156 (Arg156) interacts with ATP.

Belongs to the shikimate kinase family. Monomer. The cofactor is Mg(2+).

The protein localises to the cytoplasm. It catalyses the reaction shikimate + ATP = 3-phosphoshikimate + ADP + H(+). Its pathway is metabolic intermediate biosynthesis; chorismate biosynthesis; chorismate from D-erythrose 4-phosphate and phosphoenolpyruvate: step 5/7. Catalyzes the specific phosphorylation of the 3-hydroxyl group of shikimic acid using ATP as a cosubstrate. In Alkaliphilus oremlandii (strain OhILAs) (Clostridium oremlandii (strain OhILAs)), this protein is Shikimate kinase.